A 193-amino-acid polypeptide reads, in one-letter code: Interferon lambda-3 (193 aa).

An N-terminal signal peptide occupies residues 1–19 (MLLLLLPLLLAAVLTRTQA). Intrachain disulfides connect Cys-35/Cys-132, Cys-69/Cys-166, and Cys-185/Cys-192.

The protein belongs to the lambda interferon family.

The protein localises to the secreted. In terms of biological role, cytokine with antiviral, antitumour and immunomodulatory activities. Plays a critical role in the antiviral host defense, predominantly in the epithelial tissues. Acts as a ligand for the heterodimeric class II cytokine receptor composed of IL10RB and IFNLR1, and receptor engagement leads to the activation of the JAK/STAT signaling pathway resulting in the expression of IFN-stimulated genes (ISG), which mediate the antiviral state. Has a restricted receptor distribution and therefore restricted targets: is primarily active in epithelial cells and this cell type-selective action is because of the epithelial cell-specific expression of its receptor IFNLR1. Seems not to be essential for early virus-activated host defense in vaginal infection, but plays an important role in Toll-like receptor (TLR)-induced antiviral defense. Plays a significant role in the antiviral immune defense in the intestinal epithelium. Exerts an immunomodulatory effect by up-regulating MHC class I antigen expression. The protein is Interferon lambda-3 (Ifnl3) of Mus musculus (Mouse).